Consider the following 207-residue polypeptide: Nitrophorin-1 (207 aa).

The N-terminal stretch at Met-1–Gly-23 is a signal peptide. 2 disulfide bridges follow: Cys-25/Cys-145 and Cys-64/Cys-194. His-82 is a binding site for heme.

This sequence belongs to the calycin superfamily. Nitrophorin family. In terms of tissue distribution, salivary gland (at protein level).

It is found in the secreted. Functionally, heme-based protein that deliver nitric oxide gas (NO) to the victim while feeding, resulting in vasodilation and inhibition of platelet aggregation. Reversibly binds nitric oxide (NO). Also binds tightly to histamine, which is released by the host to induce wound healing. The chain is Nitrophorin-1 from Rhodnius prolixus (Triatomid bug).